Consider the following 178-residue polypeptide: Large ribosomal subunit protein uL5 (178 aa).

Belongs to the universal ribosomal protein uL5 family. In terms of assembly, part of the 50S ribosomal subunit; part of the 5S rRNA/L5/L18/L25 subcomplex. Contacts the 5S rRNA and the P site tRNA. Forms a bridge to the 30S subunit in the 70S ribosome.

Functionally, this is one of the proteins that bind and probably mediate the attachment of the 5S RNA into the large ribosomal subunit, where it forms part of the central protuberance. In the 70S ribosome it contacts protein S13 of the 30S subunit (bridge B1b), connecting the 2 subunits; this bridge is implicated in subunit movement. Contacts the P site tRNA; the 5S rRNA and some of its associated proteins might help stabilize positioning of ribosome-bound tRNAs. In Psychrobacter arcticus (strain DSM 17307 / VKM B-2377 / 273-4), this protein is Large ribosomal subunit protein uL5.